Consider the following 291-residue polypeptide: Maintenance of mitochondrial morphology protein 1 (291 aa).

The Lumenal segment spans residues 1 to 16 (MPNNYVFSLQPTFTQG). The helical transmembrane segment at 17–37 (LILGQLSILVLLGMILKFLFL) threads the bilayer. Topologically, residues 38–291 (DSTQHPFESS…KKEMSDADLS (254 aa)) are cytoplasmic. In terms of domain architecture, SMP-LTD spans 73–277 (NAESAEWFNV…LPGLASVVDV (205 aa)).

It belongs to the MMM1 family. Homodimer. Component of the ER-mitochondria encounter structure (ERMES) or MDM complex, composed of MMM1, MDM10, MDM12 and MDM34. An MMM1 homodimer associates with one molecule of MDM12 on each side in a pairwise head-to-tail manner, and the SMP-LTD domains of MMM1 and MDM12 generate a continuous hydrophobic tunnel for phospholipid trafficking.

The protein localises to the endoplasmic reticulum membrane. Functionally, component of the ERMES/MDM complex, which serves as a molecular tether to connect the endoplasmic reticulum (ER) and mitochondria. Components of this complex are involved in the control of mitochondrial shape and protein biogenesis, and function in nonvesicular lipid trafficking between the ER and mitochondria. The MDM12-MMM1 subcomplex functions in the major beta-barrel assembly pathway that is responsible for biogenesis of all outer membrane beta-barrel proteins, and acts in a late step after the SAM complex. The MDM10-MDM12-MMM1 subcomplex further acts in the TOM40-specific pathway after the action of the MDM12-MMM1 complex. Essential for establishing and maintaining the structure of mitochondria and maintenance of mtDNA nucleoids. This is Maintenance of mitochondrial morphology protein 1 from Laccaria bicolor (strain S238N-H82 / ATCC MYA-4686) (Bicoloured deceiver).